We begin with the raw amino-acid sequence, 610 residues long: UvrABC system protein C (610 aa).

The region spanning 16–94 (SQPGVYRMYD…IKLYQPRYNV (79 aa)) is the GIY-YIG domain. In terms of domain architecture, UVR spans 204-239 (DQVLTQLISRMETASQNLEFEEAARIRDQIQAVRRV).

It belongs to the UvrC family. Interacts with UvrB in an incision complex.

The protein resides in the cytoplasm. Functionally, the UvrABC repair system catalyzes the recognition and processing of DNA lesions. UvrC both incises the 5' and 3' sides of the lesion. The N-terminal half is responsible for the 3' incision and the C-terminal half is responsible for the 5' incision. The sequence is that of UvrABC system protein C from Escherichia coli (strain UTI89 / UPEC).